Here is a 344-residue protein sequence, read N- to C-terminus: C5a anaphylatoxin chemotactic receptor 2 (344 aa).

At 1–44 (MMNHTTSEYYDYEYDHEHYSDLPDVPVDCPAGTCFTSDVYLIVL) the chain is on the extracellular side. N-linked (GlcNAc...) asparagine glycosylation occurs at N3. The chain crosses the membrane as a helical span at residues 45–67 (LVLYAAVFLVGVPGNTLVAWVTW). Residues 68-78 (KESRHRLGASW) lie on the Cytoplasmic side of the membrane. Residues 79 to 101 (FLHLTMADLLCCVSLPFLAVPIA) form a helical membrane-spanning segment. At 102-120 (QKGHWPYGAAGCWLLSSIT) the chain is on the extracellular side. A disulfide bridge connects residues C113 and C192. The chain crosses the membrane as a helical span at residues 121-143 (ILSMYASVLLLTGLSGDLFLLAF). At 144–155 (RPSWKGADHRTF) the chain is on the cytoplasmic side. Residues 156–178 (GVRVVQASSWMLGLLLTVPSAVY) traverse the membrane as a helical segment. Over 179-208 (RRLLQEHYPPRLVCGIDYGGSVSAEVAITT) the chain is Extracellular. Residues 209-231 (VRFLFGFLGPLVFMAGCHGILQR) traverse the membrane as a helical segment. Residues 232 to 243 (QMARRHWPLGTA) are Cytoplasmic-facing. The helical transmembrane segment at 244 to 266 (VVVGFFICWTPYHVLRVIIAAAP) threads the bilayer. Over 267 to 280 (PHSLLLARVLEAEP) the chain is Extracellular. Residues 281 to 300 (LFNGLALAHSALNPIMFLYF) traverse the membrane as a helical segment. The Cytoplasmic portion of the chain corresponds to 301–344 (GRKQLCKSLQAACHWALRDPQDEESAVTKVSISTSHEMVSEMPV). S325 is subject to Phosphoserine.

It belongs to the G-protein coupled receptor 1 family. In terms of assembly, interacts with C3 (the anaphylatoxin peptide C3a and the adipogenic hormone ASP); the interaction occurs with higher affinity for ASP, enhancing the phosphorylation and activation of GPR77, recruitment of ARRB2 to the cell surface and endocytosis of GRP77. In terms of tissue distribution, highly expressed in liver and spleen. Lower levels in intestine, brain and kidney. Also expressed in adipose tissues with highest levels in gonadal and ingual fat depots. Lower levels in brown tissue.

It is found in the cell membrane. In terms of biological role, receptor for the chemotactic and inflammatory C3a, C4a and C5a anaphylatoxin peptides and also for their dearginated forms ASP/C3adesArg, C4adesArg and C5adesArg respectively. Couples weakly to G(i)-mediated signaling pathways. The polypeptide is C5a anaphylatoxin chemotactic receptor 2 (C5ar2) (Mus musculus (Mouse)).